The chain runs to 423 residues: Protein CLP1 homolog (423 aa).

Residues Glu16, Lys57, and 119–124 contribute to the ATP site; that span reads DVGKST.

The protein belongs to the Clp1 family. Clp1 subfamily.

It localises to the nucleus. Its function is as follows. Required for endonucleolytic cleavage during polyadenylation-dependent pre-mRNA 3'-end formation. This is Protein CLP1 homolog (cbc) from Drosophila sechellia (Fruit fly).